The sequence spans 612 residues: Sulfite reductase [NADPH] hemoprotein beta-component (612 aa).

The disordered stretch occupies residues 1–26; sequence MDDHKPIETPDGPAVDTPGIGARRYE. 4 residues coordinate [4Fe-4S] cluster: Cys-469, Cys-475, Cys-514, and Cys-518. Residue Cys-518 coordinates siroheme.

Belongs to the nitrite and sulfite reductase 4Fe-4S domain family. Alpha(8)-beta(8). The alpha component is a flavoprotein, the beta component is a hemoprotein. Siroheme is required as a cofactor. [4Fe-4S] cluster serves as cofactor.

It carries out the reaction hydrogen sulfide + 3 NADP(+) + 3 H2O = sulfite + 3 NADPH + 4 H(+). The protein operates within sulfur metabolism; hydrogen sulfide biosynthesis; hydrogen sulfide from sulfite (NADPH route): step 1/1. Component of the sulfite reductase complex that catalyzes the 6-electron reduction of sulfite to sulfide. This is one of several activities required for the biosynthesis of L-cysteine from sulfate. The chain is Sulfite reductase [NADPH] hemoprotein beta-component from Methylorubrum extorquens (strain PA1) (Methylobacterium extorquens).